A 176-amino-acid chain; its full sequence is 3-hydroxydecanoyl-[acyl-carrier-protein] dehydratase (176 aa).

Residue His-71 is part of the active site.

Belongs to the thioester dehydratase family. FabA subfamily. Homodimer.

The protein resides in the cytoplasm. It catalyses the reaction a (3R)-hydroxyacyl-[ACP] = a (2E)-enoyl-[ACP] + H2O. It carries out the reaction (3R)-hydroxydecanoyl-[ACP] = (2E)-decenoyl-[ACP] + H2O. The catalysed reaction is (2E)-decenoyl-[ACP] = (3Z)-decenoyl-[ACP]. It functions in the pathway lipid metabolism; fatty acid biosynthesis. Functionally, necessary for the introduction of cis unsaturation into fatty acids. Catalyzes the dehydration of (3R)-3-hydroxydecanoyl-ACP to E-(2)-decenoyl-ACP and then its isomerization to Z-(3)-decenoyl-ACP. Can catalyze the dehydratase reaction for beta-hydroxyacyl-ACPs with saturated chain lengths up to 16:0, being most active on intermediate chain length. This is 3-hydroxydecanoyl-[acyl-carrier-protein] dehydratase from Rhodopseudomonas palustris (strain BisA53).